Reading from the N-terminus, the 419-residue chain is Peptide chain release factor subunit 1 (419 aa).

This sequence belongs to the eukaryotic release factor 1 family. As to quaternary structure, heterodimer of two subunits, one of which binds GTP.

It localises to the cytoplasm. In terms of biological role, directs the termination of nascent peptide synthesis (translation) in response to the termination codons UAA, UAG and UGA. This chain is Peptide chain release factor subunit 1, found in Methanococcus maripaludis (strain C7 / ATCC BAA-1331).